A 174-amino-acid polypeptide reads, in one-letter code: Large ribosomal subunit protein uL10 (174 aa).

The protein belongs to the universal ribosomal protein uL10 family. Part of the ribosomal stalk of the 50S ribosomal subunit. The N-terminus interacts with L11 and the large rRNA to form the base of the stalk. The C-terminus forms an elongated spine to which L12 dimers bind in a sequential fashion forming a multimeric L10(L12)X complex.

In terms of biological role, forms part of the ribosomal stalk, playing a central role in the interaction of the ribosome with GTP-bound translation factors. The chain is Large ribosomal subunit protein uL10 from Acidiphilium cryptum (strain JF-5).